The chain runs to 440 residues: Transposon Ty1-PR2 Gag polyprotein (440 aa).

Composition is skewed to polar residues over residues 1–10 (MESQQLSNYP), 48–60 (TKANSQQTTTPAS), and 127–152 (QSQFPQYPSSVGTPLSTPSPESGNTF). 3 disordered regions span residues 1 to 93 (MESQ…MMTQ), 126 to 173 (PQSQ…RPPP), and 352 to 440 (GSRN…PETY). Residues 153–165 (TDSSSADSDMTST) are compositionally biased toward low complexity. The interval 299 to 401 (NNGIHINNKV…NSKSKTARAH (103 aa)) is RNA-binding. Positions 402-418 (NVSTSNNSPSTDNDSIS) are enriched in low complexity. Ser416 is modified (phosphoserine). Residues 419-428 (KSTTEPIQLN) are compositionally biased toward polar residues. Over residues 429–440 (NKHDLHLRPETY) the composition is skewed to basic and acidic residues.

Homotrimer.

It is found in the cytoplasm. Functionally, capsid protein (CA) is the structural component of the virus-like particle (VLP), forming the shell that encapsulates the retrotransposons dimeric RNA genome. The particles are assembled from trimer-clustered units and there are holes in the capsid shells that allow for the diffusion of macromolecules. CA also has nucleocapsid-like chaperone activity, promoting primer tRNA(i)-Met annealing to the multipartite primer-binding site (PBS), dimerization of Ty1 RNA and initiation of reverse transcription. In Saccharomyces cerevisiae (strain ATCC 204508 / S288c) (Baker's yeast), this protein is Transposon Ty1-PR2 Gag polyprotein (TY1A-PR2).